The primary structure comprises 358 residues: MNILNVIRPGVMNGDEARIVFELAKKKQFAIPAVNCIGTDSINAVLETAARVKSPIIIQFSHGGASFIAGYKKKLSENQEQAIQGAVSGAQHVHLMAKHYEIPVILHTDHCPKETLSWIDGLLEVGQNYYFNNNRPLFTSHMIDLSKESLEENISTCKKYFKRIKNINMMLEIELGCTGGEEDGIDNTKIDKKLLYTQPQDVNYAYEELNTISKNFSIAASFGNIHGVYQPGNIDLRPIILKNSQEFVSSKHNLEKNPLNLVFHGGSGSNLKEIKESIQYGVVKMNIDTDIQWAAWKGVLDFYKQNKEFLQHQLGNTTNKHKPNKKYYDPRTWIRKSQESISIRLEQSFKELNSFNIL.

S61 provides a ligand contact to D-glyceraldehyde 3-phosphate. D109 serves as the catalytic Proton donor. Zn(2+) is bound by residues H110, D144, E174, and H226. G227 is a binding site for dihydroxyacetone phosphate. H264 is a Zn(2+) binding site. Dihydroxyacetone phosphate-binding positions include 265 to 267 (GGS) and 286 to 289 (NIDT).

It belongs to the class II fructose-bisphosphate aldolase family. Requires Zn(2+) as cofactor.

It catalyses the reaction beta-D-fructose 1,6-bisphosphate = D-glyceraldehyde 3-phosphate + dihydroxyacetone phosphate. It participates in carbohydrate degradation; glycolysis; D-glyceraldehyde 3-phosphate and glycerone phosphate from D-glucose: step 4/4. Functionally, catalyzes the aldol condensation of dihydroxyacetone phosphate (DHAP or glycerone-phosphate) with glyceraldehyde 3-phosphate (G3P) to form fructose 1,6-bisphosphate (FBP) in gluconeogenesis and the reverse reaction in glycolysis. In Buchnera aphidicola subsp. Acyrthosiphon pisum (strain APS) (Acyrthosiphon pisum symbiotic bacterium), this protein is Fructose-bisphosphate aldolase class 2 (fbaA).